We begin with the raw amino-acid sequence, 123 residues long: Fluoride-specific ion channel FluC (123 aa).

4 helical membrane passes run 5–25 (VWVA…YKFV), 33–53 (LATF…IGAF), 62–82 (LKLA…TFAA), and 94–114 (ITAF…VALG). Na(+)-binding residues include glycine 72 and serine 75.

This sequence belongs to the fluoride channel Fluc/FEX (TC 1.A.43) family.

Its subcellular location is the cell inner membrane. The catalysed reaction is fluoride(in) = fluoride(out). Na(+) is not transported, but it plays an essential structural role and its presence is essential for fluoride channel function. Functionally, fluoride-specific ion channel. Important for reducing fluoride concentration in the cell, thus reducing its toxicity. The chain is Fluoride-specific ion channel FluC from Ignicoccus hospitalis (strain KIN4/I / DSM 18386 / JCM 14125).